Here is an 853-residue protein sequence, read N- to C-terminus: Dynein axonemal assembly factor 5 (853 aa).

The residue at position 2 (Ala2) is an N-acetylalanine. HEAT repeat units lie at residues 69-107 (GPWARLLLPRLLRLLSDPAEGCRALAAHLLDLGLRRAAR), 200-238 (HMQSESLIGPLMQTISHQHWKVRVAVIEATGTVIQFGSG), 240-276 (SVDDVLSHFAQRLFDDVPQVRQAVTSVVGGWLLNLRD), 278-316 (YSFLHKLTPLLLSSFSDEMPEIRQTATSLWEKVGLQWQQ), 374-412 (RVKAAQLLPVLLLHAEDHITQHLEIVLRTLHQACTDEEK), 597-636 (GEALQHVIPTLRACLQPSTDPHMRLKLFSILSMMLLRPKD), 694-732 (QEAQETLMPQVLATLEDDSQTTRLMSCRIINMFLKNSGD), 736-774 (PEKFLKVYPELLKRLDDVSNDVRMAAASALLTWLKCIES), and 782-820 (QSSVQFLYRELLVHLDDPESAIQDTVLEVLKEGSVLFPD).

This sequence belongs to the DNAAF5 family. In terms of assembly, interacts with DNAI2; probably involved in outer arm dynein assembly. In terms of tissue distribution, expressed in ciliated cells including ependymal cells lining the lateral ventricles and multiciliated epithelium of oviduct ampulla.

The protein resides in the cytoplasm. It is found in the cytoplasmic granule. Its function is as follows. Cytoplasmic protein involved in the delivery of the dynein machinery to the motile cilium. It is required for the assembly of the axonemal dynein inner and outer arms, two structures attached to the peripheral outer doublet A microtubule of the axoneme, that play a crucial role in cilium motility. This is Dynein axonemal assembly factor 5 from Mus musculus (Mouse).